A 199-amino-acid polypeptide reads, in one-letter code: 7-methyl-GTP pyrophosphatase (199 aa).

The active-site Proton acceptor is aspartate 73.

The protein belongs to the Maf family. YceF subfamily. The cofactor is a divalent metal cation.

The protein localises to the cytoplasm. The catalysed reaction is N(7)-methyl-GTP + H2O = N(7)-methyl-GMP + diphosphate + H(+). Nucleoside triphosphate pyrophosphatase that hydrolyzes 7-methyl-GTP (m(7)GTP). May have a dual role in cell division arrest and in preventing the incorporation of modified nucleotides into cellular nucleic acids. This chain is 7-methyl-GTP pyrophosphatase, found in Bordetella bronchiseptica (strain ATCC BAA-588 / NCTC 13252 / RB50) (Alcaligenes bronchisepticus).